A 520-amino-acid chain; its full sequence is Protein EARLY FLOWERING 5 (520 aa).

Short sequence motifs (nuclear localization signal) lie at residues 16-23 (YRKQIRKR), 52-59 (IRKLDMSK), and 71-78 (KKRQLEDT). A disordered region spans residues 83–410 (VKKRKEYDEK…PPSSFQDGQA (328 aa)). Composition is skewed to basic and acidic residues over residues 87 to 97 (KEYDEKKKEQG) and 114 to 126 (LTGE…EDSV). Low complexity predominate over residues 148–168 (SSIGLAISSDGASSSSAALSS). Composition is skewed to pro residues over residues 198–207 (PLPPLPPLPP), 216–227 (SPFPPPPPGPPP), and 235–253 (PPLP…PPPG). Polar residues-rich tracts occupy residues 267-281 (SDFT…NITS), 300-312 (AESN…NANL), and 326-343 (QQHQ…TNFQ). Pro residues-rich tracts occupy residues 346–369 (VHPP…PPHP) and 378–403 (PRPP…PPPS).

As to expression, in seedlings, mostly expressed in the shoot apical meristem (SAM) and root tip.

It localises to the nucleus. Involved in the regulation of flowering time in both long and short days. The polypeptide is Protein EARLY FLOWERING 5 (Arabidopsis thaliana (Mouse-ear cress)).